A 384-amino-acid chain; its full sequence is 1-deoxy-D-xylulose 5-phosphate reductoisomerase (384 aa).

Residues threonine 10, glycine 11, serine 12, isoleucine 13, arginine 37, asparagine 38, and asparagine 124 each contribute to the NADPH site. Lysine 125 contacts 1-deoxy-D-xylulose 5-phosphate. Residue glutamate 126 participates in NADPH binding. Aspartate 150 contributes to the Mn(2+) binding site. Positions 151, 152, 176, and 199 each coordinate 1-deoxy-D-xylulose 5-phosphate. A Mn(2+)-binding site is contributed by glutamate 152. Glycine 205 is a binding site for NADPH. 4 residues coordinate 1-deoxy-D-xylulose 5-phosphate: serine 212, asparagine 217, lysine 218, and glutamate 221. Glutamate 221 contributes to the Mn(2+) binding site.

It belongs to the DXR family. Mg(2+) serves as cofactor. Requires Mn(2+) as cofactor.

It catalyses the reaction 2-C-methyl-D-erythritol 4-phosphate + NADP(+) = 1-deoxy-D-xylulose 5-phosphate + NADPH + H(+). It functions in the pathway isoprenoid biosynthesis; isopentenyl diphosphate biosynthesis via DXP pathway; isopentenyl diphosphate from 1-deoxy-D-xylulose 5-phosphate: step 1/6. Catalyzes the NADPH-dependent rearrangement and reduction of 1-deoxy-D-xylulose-5-phosphate (DXP) to 2-C-methyl-D-erythritol 4-phosphate (MEP). This Clostridium perfringens (strain ATCC 13124 / DSM 756 / JCM 1290 / NCIMB 6125 / NCTC 8237 / Type A) protein is 1-deoxy-D-xylulose 5-phosphate reductoisomerase.